Reading from the N-terminus, the 211-residue chain is tRNA (guanine-N(7)-)-methyltransferase (211 aa).

S-adenosyl-L-methionine contacts are provided by Glu-44, Asp-69, Asp-96, and Asp-118. The active site involves Asp-118. Lys-122 contacts substrate. An interaction with RNA region spans residues 124-129; it reads RHEKRR. Residues Asp-154 and 191-194 each bind substrate; that span reads TEYE.

It belongs to the class I-like SAM-binding methyltransferase superfamily. TrmB family.

It carries out the reaction guanosine(46) in tRNA + S-adenosyl-L-methionine = N(7)-methylguanosine(46) in tRNA + S-adenosyl-L-homocysteine. It participates in tRNA modification; N(7)-methylguanine-tRNA biosynthesis. In terms of biological role, catalyzes the formation of N(7)-methylguanine at position 46 (m7G46) in tRNA. The polypeptide is tRNA (guanine-N(7)-)-methyltransferase (Streptococcus pneumoniae (strain Taiwan19F-14)).